The primary structure comprises 126 residues: UPF0538 protein C2orf76 homolog (126 aa).

This sequence belongs to the UPF0538 family.

The protein is UPF0538 protein C2orf76 homolog of Pongo abelii (Sumatran orangutan).